Consider the following 1115-residue polypeptide: MAGAGGGLGVWGNLVLLGLCSWTGARAPAPNPGRNLTVETQTTSSISLSWEVPDGLDSQNSNYWVQCTGDGGTTETRNTTATNVTVDGLGPGSLYTCSVWVEKDGVNSSVGTVTTATAPNPVRNLRVEAQTNSSIALTWEVPDGPDPQNSTYGVEYTGDGGRAGTRSTAHTNITVDGLEPGCLYAFSMWVGKNGINSSRETRNATTAHNPVRNLRVEAQTTSSISLSWEVPDGTDPQNSTYCVQCTGDGGRTETRNTTDTRVTVDGLGPGSLYTCSVWVEKDGVNSSVEIVTSATAPNPVRNLTVEAQTNSSIALTWEVPDGPDPQNSTYGVEYTGDGGRAGTRSTAHTNITVDRLEPGCLYVFSVWVGKNGINSSRETRNATTAPNPVRNLHMETQTNSSIALCWEVPDGPYPQDYTYWVEYTGDGGGTETRNTTNTSVTAERLEPGTLYTFSVWAEKNGARGSRQNVSISTVPNAVTSLSKQDWTNSTIALRWTAPQGPGQSSYSYWVSWVREGMTDPRTQSTSGTDITLKELEAGSLYHLTVWAERNEVRGYNSTLTAATAPNEVTDLQNETQTKNSVMLWWKAPGDPHSQLYVYWVQWASKGHPRRGQDPQANWVNQTSRTNETWYKVEALEPGTLYNFTVWAERNDVASSTQSLCASTYPDTVTITSCVSTSAGYGVNLIWSCPQGGYEAFELEVGGQRGSQDRSSCGEAVSVLGLGPARSYPATITTIWDGMKVVSHSVVCHTESAGVIAGAFVGILLFLILVGLLIFFLKRRNKKKQQKPELRDLVFSSPGDIPAEDFADHVRKNERDSNCGFADEYQQLSLVGHSQSQMVASASENNAKNRYRNVLPYDWSRVPLKPIHEEPGSDYINASFMPGLWSPQEFIATQGPLPQTVGDFWRLVWEQQSHTLVMLTNCMEAGRVKCEHYWPLDSQPCTHGHLRVTLVGEEVMENWTVRELLLLQVEEQKTLSVRQFHYQAWPDHGVPSSPDTLLAFWRMLRQWLDQTMEGGPPIVHCSAGVGRTGTLIALDVLLRQLQSEGLLGPFSFVRKMRESRPLMVQTEAQYVFLHQCILRFLQQSAQAPAEKEVPYEDVENLIYENVAAIQAHKLEV.

An N-terminal signal peptide occupies residues 1-27 (MAGAGGGLGVWGNLVLLGLCSWTGARA). Residues 28–754 (PAPNPGRNLT…VVCHTESAGV (727 aa)) lie on the Extracellular side of the membrane. 8 consecutive Fibronectin type-III domains span residues 32–121 (PGRN…APNP), 122–209 (VRNL…TAHN), 210–299 (PVRN…APNP), 300–387 (VRNL…TAPN), 388–477 (PVRN…VPNA), 478–563 (VTSL…TAAT), 564–666 (APNE…TYPD), and 665–749 (PDTV…VCHT). Asparagine 35, asparagine 83, asparagine 172, asparagine 256, asparagine 285, asparagine 350, asparagine 434, asparagine 468, asparagine 556, and asparagine 642 each carry an N-linked (GlcNAc...) asparagine glycan. Residues 755–775 (IAGAFVGILLFLILVGLLIFF) traverse the membrane as a helical segment. The Cytoplasmic segment spans residues 776-1115 (LKRRNKKKQQ…AAIQAHKLEV (340 aa)). A Tyrosine-protein phosphatase domain is found at 820 to 1079 (FADEYQQLSL…VFLHQCILRF (260 aa)). Residue cysteine 1020 is the Phosphocysteine intermediate of the active site. Residues tyrosine 1094 and tyrosine 1102 each carry the phosphotyrosine modification.

The protein belongs to the protein-tyrosine phosphatase family. Receptor class 3 subfamily. In terms of assembly, homodimer; disulfide-linked. Interacts with LCK. Interacts (phosphorylated form) with GRB2 (via SH2 domain). Interacts (phosphorylated form) with FYN (via SH2 domain). Interacts (via extracellular domain) with CEACAM20 (via extracellular domain); the interaction dephosphorylates CEACAM20. Expressed at high levels in the brain, spleen and liver and at lower levels in the heart and stomach. Expressed in pancreatic and colorectal cancer cells, but not in normal pancreas or colon. Expression in hepatocellular carcinoma is related to the differentiation status of the tumor and expression is inversely related to tumor aggressiveness.

The protein localises to the cell projection. The protein resides in the microvillus membrane. It is found in the apical cell membrane. It localises to the cytoplasm. It catalyses the reaction O-phospho-L-tyrosyl-[protein] + H2O = L-tyrosyl-[protein] + phosphate. Its activity is regulated as follows. Regulated by reversible dimerization. Dimerization reduces its catalytic activity. Its function is as follows. Protein phosphatase that may contribute to contact inhibition of cell growth and motility by mediating the dephosphorylation of focal adhesion-associated substrates and thus negatively regulating integrin-promoted signaling processes. Induces apoptotic cell death by at least two distinct mechanisms: inhibition of cell survival signaling mediated by PI 3-kinase, Akt, and ILK and activation of a caspase-dependent proapoptotic pathway. Inhibits the basal activity of LCK and its activation in response to TCR stimulation and TCR-induced activation of MAP kinase and surface expression of CD69. Inhibits TCR-induced tyrosine phosphorylation of LAT and ZAP70. Inhibits both basal activity of DOK1 and its CD2-induced tyrosine phosphorylation. Induces dephosphorylation of BCAR1, focal adhesion kinase and SRC. Reduces migratory activity of activity of Jurkat cells. Reduces tyrosine phosphorylation of CEACAM20 and thereby contributes to suppress the intestinal immune response CEACAM20. The polypeptide is Receptor-type tyrosine-protein phosphatase H (PTPRH) (Homo sapiens (Human)).